Here is a 201-residue protein sequence, read N- to C-terminus: Recombination protein RecR (201 aa).

The C4-type zinc-finger motif lies at 60-75 (CKRCGSYAETEICEIC). The region spanning 83-178 (HTFCVVEQPE…NVTRIAYGIT (96 aa)) is the Toprim domain.

Belongs to the RecR family.

Its function is as follows. May play a role in DNA repair. It seems to be involved in an RecBC-independent recombinational process of DNA repair. It may act with RecF and RecO. This Leptospira interrogans serogroup Icterohaemorrhagiae serovar copenhageni (strain Fiocruz L1-130) protein is Recombination protein RecR.